Reading from the N-terminus, the 330-residue chain is Sulfate/thiosulfate import ATP-binding protein CysA (330 aa).

The region spanning 3–237 (IEIRNINKQF…PASEFVYHFL (235 aa)) is the ABC transporter domain. 35–42 (GPSGCGKT) provides a ligand contact to ATP.

Belongs to the ABC transporter superfamily. Sulfate/tungstate importer (TC 3.A.1.6) family. The complex is composed of two ATP-binding proteins (CysA), two transmembrane proteins (CysT and CysW) and a solute-binding protein (CysP).

Its subcellular location is the cell inner membrane. The catalysed reaction is sulfate(out) + ATP + H2O = sulfate(in) + ADP + phosphate + H(+). It catalyses the reaction thiosulfate(out) + ATP + H2O = thiosulfate(in) + ADP + phosphate + H(+). In terms of biological role, part of the ABC transporter complex CysAWTP involved in sulfate/thiosulfate import. Responsible for energy coupling to the transport system. This chain is Sulfate/thiosulfate import ATP-binding protein CysA, found in Pectobacterium atrosepticum (strain SCRI 1043 / ATCC BAA-672) (Erwinia carotovora subsp. atroseptica).